The sequence spans 159 residues: SsrA-binding protein (159 aa).

The span at 138–153 (KREDGKDKDWSREKER) shows a compositional bias: basic and acidic residues. Residues 138–159 (KREDGKDKDWSREKERLMKHKA) are disordered.

Belongs to the SmpB family.

It is found in the cytoplasm. In terms of biological role, required for rescue of stalled ribosomes mediated by trans-translation. Binds to transfer-messenger RNA (tmRNA), required for stable association of tmRNA with ribosomes. tmRNA and SmpB together mimic tRNA shape, replacing the anticodon stem-loop with SmpB. tmRNA is encoded by the ssrA gene; the 2 termini fold to resemble tRNA(Ala) and it encodes a 'tag peptide', a short internal open reading frame. During trans-translation Ala-aminoacylated tmRNA acts like a tRNA, entering the A-site of stalled ribosomes, displacing the stalled mRNA. The ribosome then switches to translate the ORF on the tmRNA; the nascent peptide is terminated with the 'tag peptide' encoded by the tmRNA and targeted for degradation. The ribosome is freed to recommence translation, which seems to be the essential function of trans-translation. This Pseudoalteromonas translucida (strain TAC 125) protein is SsrA-binding protein.